A 70-amino-acid polypeptide reads, in one-letter code: U2-agatoxin-Ao1p (70 aa).

A signal peptide spans Met1–Ala20. Residues Val21–Arg34 constitute a propeptide that is removed on maturation. 3 disulfides stabilise this stretch: Cys37/Cys53, Cys44/Cys58, and Cys52/Cys68. A Leucine amide modification is found at Leu69.

The protein belongs to the neurotoxin 01 (U2-agtx) family. Expressed by the venom gland.

The protein resides in the secreted. In terms of biological role, insect active toxin causing rapid but reversible paralysis in crickets. No activity shown in mammals. Does not show effect on mammalian voltage-gated calcium channels. The sequence is that of U2-agatoxin-Ao1p from Agelena orientalis (Funnel-web spider).